The chain runs to 291 residues: Alpha/beta-gliadin A-II (291 aa).

An N-terminal signal peptide occupies residues 1-20 (MKTFPILALLAIVATTATTA). Positions 32–55 (NPSQQQPQEQVPLVQEQQFQGQQQ) are enriched in low complexity. Disordered regions lie at residues 32 to 120 (NPSQ…QQQQ) and 227 to 250 (QQYP…GSFQ). Pro residues-rich tracts occupy residues 56-71 (PFPP…PFPS) and 81-104 (FPQP…PQPQ). 2 stretches are compositionally biased toward low complexity: residues 105–120 (PQYS…QQQQ) and 227–237 (QQYPSGQGFFQ). The segment covering 238–250 (PSQQNPQAQGSFQ) has biased composition (polar residues).

The protein belongs to the gliadin/glutenin family. Substrate of transglutaminase.

Its function is as follows. Gliadin is the major seed storage protein in wheat. This is Alpha/beta-gliadin A-II from Triticum aestivum (Wheat).